Here is a 69-residue protein sequence, read N- to C-terminus: Arabinogalactan protein 24 (69 aa).

An N-terminal signal peptide occupies residues 1-25 (MMMMTKMFVQIAVVCLLATMAVVSA). Residues P34, P36, P38, and P40 each carry the 4-hydroxyproline modification. Residues P34, P36, P38, and P40 are each glycosylated (O-linked (Ara...) hydroxyproline). S42 carries the GPI-anchor amidated serine lipid modification. A propeptide spans 43 to 69 (SSTVVSATNMFTVLAIAAVALVVGSNH) (removed in mature form).

Belongs to the AG-peptide AGP family. Contains 4-hydroxyproline; hydroxylated on Pro-34, Pro-36, Pro-38 and Pro-40. In terms of processing, O-glycosylated on hydroxyprolines; noncontiguous hydroxylproline residues are glycosylated with arabinogalactan.

The protein localises to the cell membrane. In terms of biological role, proteoglycan that seems to be implicated in diverse developmental roles such as differentiation, cell-cell recognition, embryogenesis and programmed cell death. The chain is Arabinogalactan protein 24 from Arabidopsis thaliana (Mouse-ear cress).